The sequence spans 212 residues: Ribosomal RNA small subunit methyltransferase G (212 aa).

Residues G72, L77, 123–124 (VE), and R138 each bind S-adenosyl-L-methionine.

The protein belongs to the methyltransferase superfamily. RNA methyltransferase RsmG family.

The protein resides in the cytoplasm. It catalyses the reaction guanosine(527) in 16S rRNA + S-adenosyl-L-methionine = N(7)-methylguanosine(527) in 16S rRNA + S-adenosyl-L-homocysteine. Functionally, specifically methylates the N7 position of guanine in position 527 of 16S rRNA. This is Ribosomal RNA small subunit methyltransferase G from Histophilus somni (strain 2336) (Haemophilus somnus).